A 231-amino-acid polypeptide reads, in one-letter code: Uridylate cyclase (231 aa).

The 133-residue stretch at 46–178 folds into the Guanylate cyclase domain; it reads TVLYADLDGS…RAANYAAKLT (133 aa). Tyr49 contacts a ribonucleoside 5'-triphosphate. Asp51 and Asp95 together coordinate Mn(2+). Arg96 contacts a ribonucleoside 5'-triphosphate.

This sequence belongs to the adenylyl cyclase class-4/guanylyl cyclase family. Pyrimidine cyclase subfamily. As to quaternary structure, homodimer. It depends on Mn(2+) as a cofactor.

Its subcellular location is the cytoplasm. It carries out the reaction UTP = 3',5'-cyclic UMP + diphosphate. In terms of biological role, pycsar (pyrimidine cyclase system for antiphage resistance) provides immunity against bacteriophage. The pyrimidine cyclase (PycC) synthesizes cyclic nucleotides in response to infection; these serve as specific second messenger signals. The signal activates the adjacent effector, leading to bacterial cell death and abortive phage infection. A clade B Pycsar system. The pyrimidine cyclase gene of a two-gene Pycsar system, generates cyclic UMP (cUMP) from UTP probably in response to bacteriophage infection. Expression of this and adjacent effector XpPycTIR (AC P0DV29) confers resistance to bacteriophage T7. When cells expressing the Pycsar system are infected phage T7 at low multiplicity of infection (0.2 MOI) the culture survives, at 2.0 MOI bacteria enter growth arrest. The same cells enter growth arrest after exposure to 2.5 mM cUMP but not cCMP; the effector protein responds only to the cUMP produced by its cognate NTP cyclase. This chain is Uridylate cyclase, found in Xanthomonas perforans.